The sequence spans 430 residues: Asparagine--tRNA ligase (430 aa).

This sequence belongs to the class-II aminoacyl-tRNA synthetase family. Homodimer.

It localises to the cytoplasm. It catalyses the reaction tRNA(Asn) + L-asparagine + ATP = L-asparaginyl-tRNA(Asn) + AMP + diphosphate + H(+). The protein is Asparagine--tRNA ligase of Staphylococcus aureus (strain MRSA252).